The sequence spans 1023 residues: Sodium/potassium-transporting ATPase subunit alpha-1 (1023 aa).

Residues 1–5 constitute a propeptide that is removed on maturation; it reads MGKGV. Residues 1-11 show a composition bias toward basic and acidic residues; sequence MGKGVGRDKYE. A disordered region spans residues 1-38; the sequence is MGKGVGRDKYEPAAVSEHGDKKSKKAKKERDMDELKKE. The Cytoplasmic segment spans residues 6–87; the sequence is GRDKYEPAAV…NALTPPPTTP (82 aa). Lys-9 bears the N6-acetyllysine mark. Tyr-10 is modified (phosphotyrosine). A Phosphoserine; by PKC modification is found at Ser-16. N6-acetyllysine is present on Lys-21. At Ser-23 the chain carries Phosphoserine; by PKC. A compositionally biased stretch (basic and acidic residues) spans 28 to 38; that stretch reads KERDMDELKKE. Residues Ser-40 and Ser-47 each carry the phosphoserine modification. The segment at 82–84 is phosphoinositide-3 kinase binding; the sequence is PPP. A helical membrane pass occupies residues 88-108; the sequence is EWVKFCRQLFGGFSMLLWIGA. The Extracellular portion of the chain corresponds to 109–131; sequence ILCFLAYGIRSATEEEPPNDDLY. The helical transmembrane segment at 132–152 threads the bilayer; the sequence is LGVVLSAVVIITGCFSYYQEA. At 153–288 the chain is on the cytoplasmic side; that stretch reads KSSKIMESFK…GGQTPIAEEI (136 aa). Positions 216–235 are disordered; it reads SSLTGESEPQTRSPDFTNEN. Residue Ser-228 is modified to Phosphoserine. Tyr-260 is subject to Phosphotyrosine. Residues 289 to 308 traverse the membrane as a helical segment; sequence EHFIHLITGVAVFLGVSFFI. Residues 309–320 lie on the Extracellular side of the membrane; sequence LSLILEYTWLEA. The chain crosses the membrane as a helical span at residues 321 to 338; that stretch reads VIFLIGIIVANVPEGLLA. The Cytoplasmic portion of the chain corresponds to 339-772; the sequence is TVTVCLTLTA…EEGRLIFDNL (434 aa). Asp-376 functions as the 4-aspartylphosphate intermediate in the catalytic mechanism. Ser-452 and Ser-484 each carry phosphoserine. Lys-487 contributes to the ATP binding site. Tyr-542 carries the phosphotyrosine modification. Positions 596-717 are mediates interaction with SCN7A; that stretch reads RAAVPDAVGK…QGAIVAVTGD (122 aa). Position 661 is an N6-succinyllysine (Lys-661). 2 positions are modified to phosphoserine: Ser-668 and Ser-675. Mg(2+) is bound by residues Asp-717 and Asp-721. Residues 773-792 traverse the membrane as a helical segment; it reads KKSIAYTLTSNIPEITPFLI. The Extracellular portion of the chain corresponds to 793–802; that stretch reads FIIANIPLPL. The chain crosses the membrane as a helical span at residues 803–823; the sequence is GTVTILCIDLGTDMVPAISLA. The Cytoplasmic segment spans residues 824-843; that stretch reads YEQAESDIMKRQPRNPKTDK. A helical transmembrane segment spans residues 844-866; sequence LVNERLISMAYGQIGMIQALGGF. The Extracellular segment spans residues 867-918; that stretch reads FTYFVILAENGFLPFHLLGIRETWDDRWINDVEDSYGQQWTYEQRKIVEFTC. A helical membrane pass occupies residues 919–938; it reads HTAFFVSIVVVQWADLVICK. The Cytoplasmic portion of the chain corresponds to 939–951; the sequence is TRRNSVFQQGMKN. Ser-943 is modified (phosphoserine; by PKA). The chain crosses the membrane as a helical span at residues 952–970; it reads KILIFGLFEETALAAFLSY. At 971–985 the chain is on the extracellular side; it reads CPGMGAALRMYPLKP. The chain crosses the membrane as a helical span at residues 986–1006; the sequence is TWWFCAFPYSLLIFVYDEVRK. At 1007–1023 the chain is on the cytoplasmic side; sequence LIIRRRPGGWVEKETYY.

The protein belongs to the cation transport ATPase (P-type) (TC 3.A.3) family. Type IIC subfamily. As to quaternary structure, the sodium/potassium-transporting ATPase is composed of a catalytic alpha subunit, an auxiliary non-catalytic beta subunit and an additional regulatory subunit. Interacts with regulatory subunit FXYD1. Interacts with regulatory subunit FXYD3. Interacts with SLC35G1 and STIM1. Interacts with SIK1. Interacts with CLN3; this interaction regulates the sodium/potassium-transporting ATPase complex localization at the plasma membrane. Interacts with SCN7A; activates ATP1A1 P-type sodium:potassium-exchanging transporter activity which indirectly signals to nearby neurons to regulate sodium homeostasis. Post-translationally, phosphorylation on Tyr-10 modulates pumping activity. Phosphorylation of Ser-943 by PKA modulates the response of ATP1A1 to PKC. Dephosphorylation by protein phosphatase 2A (PP2A) following increases in intracellular sodium, leading to increase catalytic activity. In terms of tissue distribution, expressed in the central nervous system, in most motor and sensory axons of the ventral and dorsal roots, as well as in the large motor neurons of the ventral horn (at protein level).

It localises to the cell membrane. Its subcellular location is the basolateral cell membrane. The protein localises to the sarcolemma. The protein resides in the cell projection. It is found in the axon. It localises to the melanosome. The catalysed reaction is K(+)(out) + Na(+)(in) + ATP + H2O = K(+)(in) + Na(+)(out) + ADP + phosphate + H(+). This is the catalytic component of the active enzyme, which catalyzes the hydrolysis of ATP coupled with the exchange of sodium and potassium ions across the plasma membrane. This action creates the electrochemical gradient of sodium and potassium ions, providing the energy for active transport of various nutrients. Could also be part of an osmosensory signaling pathway that senses body-fluid sodium levels and controls salt intake behavior as well as voluntary water intake to regulate sodium homeostasis. In Rattus norvegicus (Rat), this protein is Sodium/potassium-transporting ATPase subunit alpha-1 (Atp1a1).